A 273-amino-acid polypeptide reads, in one-letter code: UPF0380 protein YubP (273 aa).

The protein belongs to the UPF0380 family.

This is UPF0380 protein YubP (yubP) from Escherichia coli (strain K12).